A 110-amino-acid polypeptide reads, in one-letter code: uncharacterized protein (110 aa).

3 consecutive transmembrane segments (helical) span residues 5-25, 62-82, and 90-110; these read ILAI…PIHL, FPII…AIVS, and GISI…LISI.

The protein to A.fulgidus AF1754.

The protein localises to the cell membrane. This is an uncharacterized protein from Methanocaldococcus jannaschii (strain ATCC 43067 / DSM 2661 / JAL-1 / JCM 10045 / NBRC 100440) (Methanococcus jannaschii).